The chain runs to 508 residues: Photosystem II CP47 reaction center protein (508 aa).

Transmembrane regions (helical) follow at residues 21–36 (AVHI…WAGS), 101–115 (ILFS…IWHW), 140–156 (GIHL…FGAF), 203–218 (IAAG…FHLS), 237–252 (VLSS…AFVV), and 457–472 (SFAL…HGAR).

This sequence belongs to the PsbB/PsbC family. PsbB subfamily. PSII is composed of 1 copy each of membrane proteins PsbA, PsbB, PsbC, PsbD, PsbE, PsbF, PsbH, PsbI, PsbJ, PsbK, PsbL, PsbM, PsbT, PsbX, PsbY, PsbZ, Psb30/Ycf12, at least 3 peripheral proteins of the oxygen-evolving complex and a large number of cofactors. It forms dimeric complexes. It depends on Binds multiple chlorophylls. PSII binds additional chlorophylls, carotenoids and specific lipids. as a cofactor.

The protein resides in the plastid. The protein localises to the chloroplast thylakoid membrane. Functionally, one of the components of the core complex of photosystem II (PSII). It binds chlorophyll and helps catalyze the primary light-induced photochemical processes of PSII. PSII is a light-driven water:plastoquinone oxidoreductase, using light energy to abstract electrons from H(2)O, generating O(2) and a proton gradient subsequently used for ATP formation. The protein is Photosystem II CP47 reaction center protein of Oenothera argillicola (Appalachian evening primrose).